We begin with the raw amino-acid sequence, 234 residues long: Probable transcriptional regulatory protein PSPPH_2212 (234 aa).

It belongs to the TACO1 family.

Its subcellular location is the cytoplasm. This Pseudomonas savastanoi pv. phaseolicola (strain 1448A / Race 6) (Pseudomonas syringae pv. phaseolicola (strain 1448A / Race 6)) protein is Probable transcriptional regulatory protein PSPPH_2212.